Consider the following 208-residue polypeptide: UPF0323 lipoprotein HH_0014 (208 aa).

Positions 1-26 (MKHIHKIKNYAMVGGLGVMAVFALNA) are cleaved as a signal peptide. The N-palmitoyl cysteine moiety is linked to residue Cys-27. Cys-27 carries S-diacylglycerol cysteine lipidation. A disordered region spans residues 148 to 208 (ANSQRNYKSP…TNRNTGSMGS (61 aa)). 2 stretches are compositionally biased toward low complexity: residues 169-185 (SAKTGASGASKTSSGKS) and 193-208 (SSQSTSTNRNTGSMGS).

It belongs to the UPF0323 family.

It is found in the cell membrane. The sequence is that of UPF0323 lipoprotein HH_0014 from Helicobacter hepaticus (strain ATCC 51449 / 3B1).